A 249-amino-acid chain; its full sequence is Ubiquinone/menaquinone biosynthesis C-methyltransferase UbiE (249 aa).

S-adenosyl-L-methionine contacts are provided by residues Thr-74, Asp-93, and 121-122 (DA).

It belongs to the class I-like SAM-binding methyltransferase superfamily. MenG/UbiE family.

The enzyme catalyses a 2-demethylmenaquinol + S-adenosyl-L-methionine = a menaquinol + S-adenosyl-L-homocysteine + H(+). It catalyses the reaction a 2-methoxy-6-(all-trans-polyprenyl)benzene-1,4-diol + S-adenosyl-L-methionine = a 5-methoxy-2-methyl-3-(all-trans-polyprenyl)benzene-1,4-diol + S-adenosyl-L-homocysteine + H(+). It functions in the pathway quinol/quinone metabolism; menaquinone biosynthesis; menaquinol from 1,4-dihydroxy-2-naphthoate: step 2/2. It participates in cofactor biosynthesis; ubiquinone biosynthesis. Functionally, methyltransferase required for the conversion of demethylmenaquinol (DMKH2) to menaquinol (MKH2) and the conversion of 2-polyprenyl-6-methoxy-1,4-benzoquinol (DDMQH2) to 2-polyprenyl-3-methyl-6-methoxy-1,4-benzoquinol (DMQH2). This chain is Ubiquinone/menaquinone biosynthesis C-methyltransferase UbiE, found in Acidiphilium cryptum (strain JF-5).